Consider the following 879-residue polypeptide: DNA double-strand break repair Rad50 ATPase (879 aa).

Residues 32-38 (NGAGKSS) and Q139 each bind ATP. 2 coiled-coil regions span residues 184–304 (IELQ…NKIK) and 342–436 (EIKG…NQVK). The 99-residue stretch at 394 to 492 (LQKLNEDLNN…LISELNQIIN (99 aa)) folds into the Zinc-hook domain. Positions 440 and 443 each coordinate Zn(2+). The stretch at 502–722 (IRNLADYNNL…LITAYDKLKK (221 aa)) forms a coiled coil. 786–791 (LLSGGE) lines the ATP pocket.

Belongs to the SMC family. RAD50 subfamily. In terms of assembly, homodimer. Forms a heterotetramer composed of two Mre11 subunits and two Rad50 subunits. Zn(2+) is required as a cofactor.

In terms of biological role, part of the Rad50/Mre11 complex, which is involved in the early steps of DNA double-strand break (DSB) repair. The complex may facilitate opening of the processed DNA ends to aid in the recruitment of HerA and NurA. Rad50 controls the balance between DNA end bridging and DNA resection via ATP-dependent structural rearrangements of the Rad50/Mre11 complex. This is DNA double-strand break repair Rad50 ATPase from Sulfurisphaera tokodaii (strain DSM 16993 / JCM 10545 / NBRC 100140 / 7) (Sulfolobus tokodaii).